A 764-amino-acid chain; its full sequence is Sesterfisherol synthase (764 aa).

Residues 2–331 form a terpene cyclase region; the sequence is EVWEHSRPIA…SPRHHAWRNN (330 aa). Aspartate 95 contributes to the Mg(2+) binding site. Substrate contacts are provided by residues aspartate 95, 187-190, asparagine 231, 235-239, and 324-325; these read RRDD, SFDRE, and RH. A DDXXD 1 motif is present at residues 95 to 99; the sequence is DDGYE. Positions 231 to 239 match the NSE/DTE motif; sequence NDYWSFDRE. The prenyltransferase stretch occupies residues 332-759; that stretch reads SRNGLKPANH…PMLRLLLEKL (428 aa). The tract at residues 347 to 372 is disordered; that stretch reads LITPSNNLNSSKGSEEQMQDSDNGTR. Over residues 348–358 the composition is skewed to polar residues; the sequence is ITPSNNLNSSK. Positions 476, 479, and 508 each coordinate isopentenyl diphosphate. Mg(2+)-binding residues include aspartate 515 and aspartate 519. A DDXXD 2 motif is present at residues 515-519; sequence DDIED. Arginine 524 lines the dimethylallyl diphosphate pocket. Arginine 525 is an isopentenyl diphosphate binding site. Positions 602, 603, 638, 645, 655, and 665 each coordinate dimethylallyl diphosphate.

This sequence in the N-terminal section; belongs to the terpene synthase family. In the C-terminal section; belongs to the FPP/GGPP synthase family. Hexamer. The cofactor is Mg(2+).

It carries out the reaction isopentenyl diphosphate + (2E,6E)-farnesyl diphosphate = (2E,6E,10E)-geranylgeranyl diphosphate + diphosphate. The enzyme catalyses isopentenyl diphosphate + (2E,6E,10E)-geranylgeranyl diphosphate = (2E,6E,10E,14E)-geranylfarnesyl diphosphate + diphosphate. The catalysed reaction is (2E,6E,10E,14E)-geranylfarnesyl diphosphate + H2O = sesterfisherol + diphosphate. It participates in secondary metabolite biosynthesis; terpenoid biosynthesis. Functionally, bifunctional terpene synthase; part of the gene cluster that mediates the biosynthesis of sesterfisheric acid. The bifunctional terpene synthase NfSS converts dimethylallyl diphosphate (DMAPP) and isopentenyl diphosphate (IPP) into sesterfisherol. The C-terminal prenyltransferase (PT) domain of NfSS catalyzes formation of geranylfarnesyl pyrophosphate (GFPP), whereas the N-terminal terpene cyclase (TC) domain catalyzes the cyclization of GFPP to sesterfisherol. The cytochrome P450 monooxygenase NfP450 then catalyzes oxidative modifications of sesterfisherol into sesterfisheric acid. The protein is Sesterfisherol synthase of Neosartorya fischeri (strain ATCC 1020 / DSM 3700 / CBS 544.65 / FGSC A1164 / JCM 1740 / NRRL 181 / WB 181) (Aspergillus fischerianus).